We begin with the raw amino-acid sequence, 247 residues long: Probable transcriptional regulatory protein Glov_1245 (247 aa).

This sequence belongs to the TACO1 family.

The protein resides in the cytoplasm. The polypeptide is Probable transcriptional regulatory protein Glov_1245 (Trichlorobacter lovleyi (strain ATCC BAA-1151 / DSM 17278 / SZ) (Geobacter lovleyi)).